The chain runs to 485 residues: Predicted GPI-anchored protein 27 (485 aa).

An N-terminal signal peptide occupies residues 1–20 (MHFTSSLLATLIWFTLPVQS). N-linked (GlcNAc...) asparagine glycosylation is found at asparagine 30, asparagine 86, asparagine 96, and asparagine 444. Residue glycine 467 is the site of GPI-anchor amidated glycine attachment. The propeptide at 468–485 (LVLVSSGVLLGTCLLFIL) is removed in mature form.

The protein resides in the cell membrane. This chain is Predicted GPI-anchored protein 27 (PGA27), found in Candida albicans (strain SC5314 / ATCC MYA-2876) (Yeast).